Reading from the N-terminus, the 343-residue chain is S-adenosylmethionine:tRNA ribosyltransferase-isomerase (343 aa).

The protein belongs to the QueA family. As to quaternary structure, monomer.

It is found in the cytoplasm. The enzyme catalyses 7-aminomethyl-7-carbaguanosine(34) in tRNA + S-adenosyl-L-methionine = epoxyqueuosine(34) in tRNA + adenine + L-methionine + 2 H(+). It functions in the pathway tRNA modification; tRNA-queuosine biosynthesis. Transfers and isomerizes the ribose moiety from AdoMet to the 7-aminomethyl group of 7-deazaguanine (preQ1-tRNA) to give epoxyqueuosine (oQ-tRNA). The protein is S-adenosylmethionine:tRNA ribosyltransferase-isomerase of Enterococcus faecalis (strain ATCC 700802 / V583).